Reading from the N-terminus, the 328-residue chain is DNA-directed RNA polymerase subunit alpha (328 aa).

Positions 1 to 231 are alpha N-terminal domain (alpha-NTD); the sequence is MIYQMQMPAK…EHVTFFADFS (231 aa). The tract at residues 252–328 is alpha C-terminal domain (alpha-CTD); that stretch reads MRKLFNTKIE…MDITKYQMKG (77 aa).

This sequence belongs to the RNA polymerase alpha chain family. As to quaternary structure, homodimer. The RNAP catalytic core consists of 2 alpha, 1 beta, 1 beta' and 1 omega subunit. When a sigma factor is associated with the core the holoenzyme is formed, which can initiate transcription.

The catalysed reaction is RNA(n) + a ribonucleoside 5'-triphosphate = RNA(n+1) + diphosphate. In terms of biological role, DNA-dependent RNA polymerase catalyzes the transcription of DNA into RNA using the four ribonucleoside triphosphates as substrates. The sequence is that of DNA-directed RNA polymerase subunit alpha from Chlorobium limicola (strain DSM 245 / NBRC 103803 / 6330).